An 88-amino-acid polypeptide reads, in one-letter code: Guanine nucleotide-binding protein subunit gamma (88 aa).

Residue Cys-84 is the site of S-palmitoyl cysteine attachment. Cys-85 carries the post-translational modification Cysteine methyl ester. A lipid anchor (S-farnesyl cysteine) is attached at Cys-85. The propeptide at 86 to 88 (TIM) is removed in mature form.

Belongs to the G protein gamma family. As to quaternary structure, g proteins are composed of 3 units, alpha, beta and gamma.

Its subcellular location is the membrane. The polypeptide is Guanine nucleotide-binding protein subunit gamma (Candida glabrata (strain ATCC 2001 / BCRC 20586 / JCM 3761 / NBRC 0622 / NRRL Y-65 / CBS 138) (Yeast)).